An 814-amino-acid polypeptide reads, in one-letter code: Cadherin-15 (814 aa).

Residues methionine 1–glycine 21 form the signal peptide. Residues valine 22–arginine 60 constitute a propeptide that is removed on maturation. Cadherin domains are found at residues leucine 61–phenylalanine 152, leucine 153–phenylalanine 260, threonine 261–phenylalanine 375, glutamine 376–proline 481, and valine 482–proline 590. Over leucine 61 to alanine 606 the chain is Extracellular. A glycan (N-linked (GlcNAc...) asparagine) is linked at asparagine 227. Residues asparagine 531, asparagine 538, and asparagine 576 are each glycosylated (N-linked (GlcNAc...) asparagine). A helical transmembrane segment spans residues leucine 607–leucine 626. Over arginine 627–alanine 814 the chain is Cytoplasmic. Disordered regions lie at residues glycine 636–aspartate 663 and threonine 676–valine 703.

In terms of tissue distribution, expressed in the brain and cerebellum.

The protein localises to the cell membrane. Functionally, cadherins are calcium-dependent cell adhesion proteins. They preferentially interact with themselves in a homophilic manner in connecting cells; cadherins may thus contribute to the sorting of heterogeneous cell types. M-cadherin is part of the myogenic program and may provide a trigger for terminal muscle differentiation. The polypeptide is Cadherin-15 (CDH15) (Homo sapiens (Human)).